A 1359-amino-acid polypeptide reads, in one-letter code: MSYSFAEKKRIRKSFAKRTSILPFPFLLATQIESYADFLQADVAPGKRKNQGLQAAFNAVFPIESHSNNARLDFISYMLGTSVFDVKECQQRGLTYASPLRARVRLTIMDKEASKPTVKEVKEQEVYMGEIPLMTETGSFVVNGTERVIVSQLHRSPGVFFEHDRGKTHSSGKLLFSARIIPYRGSWLDFEFDPKDYVYFRIDRRRKMPVTTLLKAMGYSSTQILADFFEFDHFTLAGNKILFHLIPERLRGELASFDIVSEDGKVFVQKDKRITAKHVRDLQQANLTKISVPEEFLLGKILAEDIVDKETGEVVATANSEINETLLERIKQTQNKNSEISTLFVNDLNYGPYISQTLRVDESTDQMSAQVAIYRMMRPGEPPTEDAVLALFNGLFYSPERYDLSVVGRMKFNRRVGREELTGSTTLSNEDITDVIKILVGLRNGRGEIDDIDHLGNRRVRSVGELAENQFRAGLARVEKAVKERLSQAESENLMPHDFINAKPVSSAIREFFGSSQLSQFMDQTNPLSEITHKRRISALGPGGLTRERAGFEVRDVHPTHYGRVCPIETPEGPNIGLINSLALYARTNEYGFIETPYRMVKNSRVTEEVVYLSAIEESQYVIAQANANFDQTGVFTDEVVSCRHKNEFTLASRDQIEYVDIAPAQIVSVAASLIPFLEHDDANRALMGSNMQRQAVPCLRAEKPLVGTGIERVVAVHSGTAVKALRGGVVDYVDAGRIVIRVHDAETRAGEVGVDIYNLTKYIRSNQNTNINQRPIVKIGDILSREDVIADGASTDLGELALGQNMLIAFMPWNGLNFEDSILISERVVSDDRFTSIHIEELTAVSRDTKLGTEEVTADIPNLSERQRARLDESGIVYIGAEVEAGDVLVGKVTPKSETQLTPEEKLLRAIFGEKASDVKDTSLHVPAGISGTVIDVQIFTREGVDRDKRSKQIIADELGRFKKDLADQMRIVEADAFQRAKRLLAGKVAAGGPKKLAKNSTITQEYLESVEKHHWFDIRLIDENTSLQLEQIKDSLVQKRKLFDLAFEEKQRKLSQGDELPPGVQKMVKVYIAVKRRLQSGDKMAGRHGNKGVISKIVPVEDMPYMADGTPVDVVLNPLGVPSRMNIGQVLEVHLGWAAKGLGKKINEMLISQRDASEIRDFLSKIYSDNGKQEDLVSLDDKEILELAKNLSDGVPFATPVFDGAHESEIKHMLKLADLPESGQTTLYDGRTGEAFDRLVTVGYMHVLKLHHLVDDKMHARSTGPYSLVTQQPLGGKAQFGGQRFGEMEVWALEAYGAAYTLQEMLTVKSDDVNGRTKVYESIVKGDHKIDAGMPESFNVLVKEIRSLGLDIDLEQH.

Belongs to the RNA polymerase beta chain family. In terms of assembly, the RNAP catalytic core consists of 2 alpha, 1 beta, 1 beta' and 1 omega subunit. When a sigma factor is associated with the core the holoenzyme is formed, which can initiate transcription.

The enzyme catalyses RNA(n) + a ribonucleoside 5'-triphosphate = RNA(n+1) + diphosphate. Its function is as follows. DNA-dependent RNA polymerase catalyzes the transcription of DNA into RNA using the four ribonucleoside triphosphates as substrates. This is DNA-directed RNA polymerase subunit beta from Nitrosomonas eutropha (strain DSM 101675 / C91 / Nm57).